Reading from the N-terminus, the 408-residue chain is Peptidase T (408 aa).

Zn(2+) is bound at residue histidine 78. Aspartate 80 is an active-site residue. Zn(2+) is bound at residue aspartate 141. The active-site Proton acceptor is the glutamate 175. Positions 176, 198, and 380 each coordinate Zn(2+).

Belongs to the peptidase M20B family. Requires Zn(2+) as cofactor.

The protein resides in the cytoplasm. It carries out the reaction Release of the N-terminal residue from a tripeptide.. In terms of biological role, cleaves the N-terminal amino acid of tripeptides. In Clostridium botulinum (strain 657 / Type Ba4), this protein is Peptidase T.